We begin with the raw amino-acid sequence, 475 residues long: Ribulose bisphosphate carboxylase large chain (475 aa).

The propeptide occupies 1 to 2 (MS). At Pro-3 the chain carries N-acetylproline. 2 residues coordinate substrate: Asn-123 and Thr-173. The active-site Proton acceptor is Lys-175. Lys-177 contributes to the substrate binding site. Mg(2+)-binding residues include Lys-201, Asp-203, and Glu-204. Lys-201 carries the N6-carboxylysine modification. The Proton acceptor role is filled by His-294. Substrate-binding residues include Arg-295, His-327, and Ser-379.

This sequence belongs to the RuBisCO large chain family. Type I subfamily. As to quaternary structure, heterohexadecamer of 8 large chains and 8 small chains; disulfide-linked. The disulfide link is formed within the large subunit homodimers. It depends on Mg(2+) as a cofactor. The disulfide bond which can form in the large chain dimeric partners within the hexadecamer appears to be associated with oxidative stress and protein turnover.

The protein localises to the plastid. The protein resides in the chloroplast. The catalysed reaction is 2 (2R)-3-phosphoglycerate + 2 H(+) = D-ribulose 1,5-bisphosphate + CO2 + H2O. It carries out the reaction D-ribulose 1,5-bisphosphate + O2 = 2-phosphoglycolate + (2R)-3-phosphoglycerate + 2 H(+). Its function is as follows. RuBisCO catalyzes two reactions: the carboxylation of D-ribulose 1,5-bisphosphate, the primary event in carbon dioxide fixation, as well as the oxidative fragmentation of the pentose substrate in the photorespiration process. Both reactions occur simultaneously and in competition at the same active site. The chain is Ribulose bisphosphate carboxylase large chain from Gnetum parvifolium (Small-leaved jointfir).